Here is a 410-residue protein sequence, read N- to C-terminus: Lissencephaly-1 homolog A (410 aa).

The region spanning 7 to 39 is the LisH domain; sequence QRDELNRAIADYLRSNGYEEAYSTFKKEAELDM. A coiled-coil region spans residues 56–82; the sequence is TSVIRLQKKVMELESKLNEAKEEITLG. WD repeat units follow at residues 106–147, 148–187, 190–229, 232–271, 274–333, 336–375, and 378–410; these read GHRS…RTLK, GHTD…CIRT, GHDH…CVKT, GHRE…CKAE, EHEH…CLMT, GHDN…CMKT, and AHEH…WECR.

Belongs to the WD repeat LIS1/nudF family. In terms of assembly, can self-associate. Component of the cytosolic PAF-AH (I) heterotetrameric enzyme, which is composed of PAFAH1B1 (beta), PAFAH1B2 (alpha2) and PAFAH1B3 (alpha1) subunits. The catalytic activity of the enzyme resides in the alpha1 (PAFAH1B3) and alpha2 (PAFAH1B2) subunits, whereas the beta subunit (PAFAH1B1) has regulatory activity. Trimer formation is not essential for the catalytic activity. Interacts with dynein, dynactin, nde1 and ndel1.

The protein resides in the cytoplasm. The protein localises to the cytoskeleton. It is found in the microtubule organizing center. Its subcellular location is the centrosome. Functionally, regulatory subunit (beta subunit) of the cytosolic type I platelet-activating factor (PAF) acetylhydrolase (PAF-AH (I)), an enzyme that catalyzes the hydrolyze of the acetyl group at the sn-2 position of PAF and its analogs and participates in PAF inactivation. Regulates the PAF-AH (I) activity in a catalytic dimer composition-dependent manner. Positively regulates the activity of the minus-end directed microtubule motor protein dynein. May enhance dynein-mediated microtubule sliding by targeting dynein to the microtubule plus end. Required for several dynein- and microtubule-dependent processes such as the maintenance of Golgi integrity, the peripheral transport of microtubule fragments and the coupling of the nucleus and centrosome. May be required for proliferation of neuronal precursors and neuronal migration. This Salmo salar (Atlantic salmon) protein is Lissencephaly-1 homolog A (pafah1b1-1).